The primary structure comprises 240 residues: ATP-dependent dethiobiotin synthetase BioD (240 aa).

15–20 (EIGKTF) lines the ATP pocket. Thr19 is a binding site for Mg(2+). Lys40 is a catalytic residue. ATP-binding positions include Asp57, 118–121 (EGVG), and 178–179 (NR). 2 residues coordinate Mg(2+): Asp57 and Glu118.

Belongs to the dethiobiotin synthetase family. As to quaternary structure, homodimer. Requires Mg(2+) as cofactor.

The protein localises to the cytoplasm. It carries out the reaction (7R,8S)-7,8-diammoniononanoate + CO2 + ATP = (4R,5S)-dethiobiotin + ADP + phosphate + 3 H(+). It functions in the pathway cofactor biosynthesis; biotin biosynthesis; biotin from 7,8-diaminononanoate: step 1/2. Functionally, catalyzes a mechanistically unusual reaction, the ATP-dependent insertion of CO2 between the N7 and N8 nitrogen atoms of 7,8-diaminopelargonic acid (DAPA, also called 7,8-diammoniononanoate) to form a ureido ring. In Burkholderia mallei (strain NCTC 10247), this protein is ATP-dependent dethiobiotin synthetase BioD.